Here is a 319-residue protein sequence, read N- to C-terminus: Malate dehydrogenase (319 aa).

NAD(+) contacts are provided by residues 7–13 (GAAGGIG) and aspartate 34. The substrate site is built by arginine 81 and arginine 87. NAD(+) contacts are provided by residues asparagine 94 and 117–119 (ITN). Substrate contacts are provided by asparagine 119 and arginine 153. The active-site Proton acceptor is the histidine 177. Methionine 227 serves as a coordination point for NAD(+).

This sequence belongs to the LDH/MDH superfamily. MDH type 1 family. Homodimer.

The catalysed reaction is (S)-malate + NAD(+) = oxaloacetate + NADH + H(+). Functionally, catalyzes the reversible oxidation of malate to oxaloacetate. The sequence is that of Malate dehydrogenase from Psychromonas ingrahamii (strain DSM 17664 / CCUG 51855 / 37).